A 423-amino-acid polypeptide reads, in one-letter code: NDP-N-acetyl-D-galactosaminuronic acid dehydrogenase (423 aa).

NAD(+) is bound at residue threonine 11–leucine 28. Lysine 218 (proton donor/acceptor) is an active-site residue. Catalysis depends on cysteine 272, which acts as the Nucleophile.

Belongs to the UDP-glucose/GDP-mannose dehydrogenase family.

In terms of biological role, probably involved in the synthesis of sugar components of EPS I, by converting NDP-N-acetyl-D-galactosamine into NDP-N-acetyl-D-galactosaminuronic acid. This is NDP-N-acetyl-D-galactosaminuronic acid dehydrogenase (epsD) from Ralstonia nicotianae (strain ATCC BAA-1114 / GMI1000) (Ralstonia solanacearum).